The following is a 241-amino-acid chain: tRNA (guanine-N(7)-)-methyltransferase (241 aa).

Over residues 1–10 (MTESNETPNT) the composition is skewed to polar residues. Positions 1–21 (MTESNETPNTPEAGDESKHRR) are disordered. Residues glutamate 71, glutamate 96, aspartate 123, and aspartate 146 each contribute to the S-adenosyl-L-methionine site. The active site involves aspartate 146. Residues lysine 150, aspartate 182, and 219 to 222 (TKFE) each bind substrate.

It belongs to the class I-like SAM-binding methyltransferase superfamily. TrmB family.

The catalysed reaction is guanosine(46) in tRNA + S-adenosyl-L-methionine = N(7)-methylguanosine(46) in tRNA + S-adenosyl-L-homocysteine. It participates in tRNA modification; N(7)-methylguanine-tRNA biosynthesis. Catalyzes the formation of N(7)-methylguanine at position 46 (m7G46) in tRNA. This Pseudomonas fluorescens (strain SBW25) protein is tRNA (guanine-N(7)-)-methyltransferase.